A 338-amino-acid polypeptide reads, in one-letter code: Cytoskeleton protein RodZ (338 aa).

The Cytoplasmic portion of the chain corresponds to 1 to 111; that stretch reads MNTEATHDQN…LGKRRKKRDG (111 aa). In terms of domain architecture, HTH cro/C1-type spans 19-71; sequence LRNAREQLGLSQQAVAERLCLKVSTVRDIEEDKAPADLASTFLRGYIRSYARL. The H-T-H motif DNA-binding region spans 30–49; the sequence is QQAVAERLCLKVSTVRDIEE. Residues 112-132 form a helical; Signal-anchor for type II membrane protein membrane-spanning segment; it reads WLMTFTWLVLFVVIGLSGAWW. The Periplasmic portion of the chain corresponds to 133–338; that stretch reads WQDHKAQQEE…TLNAEQSPAQ (206 aa). Polar residues predominate over residues 155 to 169; sequence NANGTNSQSIPLENS. Residues 155–240 are disordered; sequence NANGTNSQSI…TTPDTATPLP (86 aa). The span at 170–188 shows a compositional bias: low complexity; sequence TTTVPEATPAPAAPVDTTA. Over residues 203–217 the composition is skewed to polar residues; it reads EPQQNAVVPPSQANV. Low complexity predominate over residues 218–240; that stretch reads DTATTAPAAPATTTTPDTATPLP.

The protein belongs to the RodZ family.

It is found in the cell inner membrane. Its function is as follows. Cytoskeletal protein that is involved in cell-shape control through regulation of the length of the long axis. The polypeptide is Cytoskeleton protein RodZ (Escherichia fergusonii (strain ATCC 35469 / DSM 13698 / CCUG 18766 / IAM 14443 / JCM 21226 / LMG 7866 / NBRC 102419 / NCTC 12128 / CDC 0568-73)).